The chain runs to 805 residues: Leucine--tRNA ligase (805 aa).

Residues Pro40–His51 carry the 'HIGH' region motif. A 'KMSKS' region motif is present at residues Lys576–Ser580. Lys579 is an ATP binding site.

This sequence belongs to the class-I aminoacyl-tRNA synthetase family.

It localises to the cytoplasm. The enzyme catalyses tRNA(Leu) + L-leucine + ATP = L-leucyl-tRNA(Leu) + AMP + diphosphate. This is Leucine--tRNA ligase from Chlorobium chlorochromatii (strain CaD3).